The chain runs to 427 residues: Glutamyl-tRNA(Gln) amidotransferase subunit D (427 aa).

Over residues 1 to 18 (MTADPGDRVRVTHGDASH) the composition is skewed to basic and acidic residues. The disordered stretch occupies residues 1–20 (MTADPGDRVRVTHGDASHEG). In terms of domain architecture, Asparaginase/glutaminase spans 80-413 (PTIALISTGG…DDPEAAMQES (334 aa)). Active-site residues include Thr-90, Thr-166, Asp-167, and Lys-243.

The protein belongs to the asparaginase 1 family. GatD subfamily. As to quaternary structure, heterodimer of GatD and GatE.

It carries out the reaction L-glutamyl-tRNA(Gln) + L-glutamine + ATP + H2O = L-glutaminyl-tRNA(Gln) + L-glutamate + ADP + phosphate + H(+). In terms of biological role, allows the formation of correctly charged Gln-tRNA(Gln) through the transamidation of misacylated Glu-tRNA(Gln) in organisms which lack glutaminyl-tRNA synthetase. The reaction takes place in the presence of glutamine and ATP through an activated gamma-phospho-Glu-tRNA(Gln). The GatDE system is specific for glutamate and does not act on aspartate. The protein is Glutamyl-tRNA(Gln) amidotransferase subunit D of Halobacterium salinarum (strain ATCC 29341 / DSM 671 / R1).